A 501-amino-acid polypeptide reads, in one-letter code: Ribose import ATP-binding protein RbsA (501 aa).

2 consecutive ABC transporter domains span residues 8-245 (LKMV…VGRT) and 255-500 (VKKG…VGIN). 40-47 (GENGAGKS) serves as a coordination point for ATP.

It belongs to the ABC transporter superfamily. Ribose importer (TC 3.A.1.2.1) family. The complex is composed of an ATP-binding protein (RbsA), two transmembrane proteins (RbsC) and a solute-binding protein (RbsB).

It is found in the cell membrane. The enzyme catalyses D-ribose(out) + ATP + H2O = D-ribose(in) + ADP + phosphate + H(+). Functionally, part of the ABC transporter complex RbsABC involved in ribose import. Responsible for energy coupling to the transport system. This is Ribose import ATP-binding protein RbsA from Clostridium perfringens (strain 13 / Type A).